The chain runs to 441 residues: uncharacterized protein (441 aa).

A compositionally biased stretch (low complexity) spans T121–Q143. 2 disordered regions span residues T121–S146 and S371–N392. Polar residues predominate over residues P382 to P391.

This is an uncharacterized protein from Dictyostelium discoideum (Social amoeba).